The primary structure comprises 308 residues: Urease accessory protein UreD (308 aa).

The protein belongs to the UreD family. In terms of assembly, ureD, UreF and UreG form a complex that acts as a GTP-hydrolysis-dependent molecular chaperone, activating the urease apoprotein by helping to assemble the nickel containing metallocenter of UreC. The UreE protein probably delivers the nickel.

It is found in the cytoplasm. Its function is as follows. Required for maturation of urease via the functional incorporation of the urease nickel metallocenter. The protein is Urease accessory protein UreD of Psychromonas ingrahamii (strain DSM 17664 / CCUG 51855 / 37).